The primary structure comprises 388 residues: Subtilisin-like serine protease AsES (388 aa).

An N-terminal signal peptide occupies residues 1–15 (MRLSLVLALLPVAFG). Positions 16–105 (APTRRDEPAP…IEQDAIVTLA (90 aa)) are cleaved as a propeptide — removed in mature form. The 275-residue stretch at 114–388 (PWGLARISTR…RLAFNGNPSG (275 aa)) folds into the Peptidase S8 domain. A disulfide bond links Cys-141 and Cys-230. Active-site charge relay system residues include Asp-146 and His-176. N-linked (GlcNAc...) asparagine glycans are attached at residues Asn-232 and Asn-237. Cysteines 285 and 357 form a disulfide. The Charge relay system role is filled by Ser-331.

It belongs to the peptidase S8 family.

Its subcellular location is the secreted. With respect to regulation, the elicitor proteolytic activity is completely inhibited by PMSF. The activity is also significantly reduced by aprotinin (leading to 37% residual activity), by leupeptin (leading to 54% residual activity), by the ovomucoid trypsin inhibitor (leading to 65% residual activity), and by p-aminobenzamidine (leading to 26% residual activity). Its function is as follows. Extracellular elicitor protein that induces a strong defense response in strawberry and confers both local and systemic plant resistance against the fungal pathogen Colletotricum acutatum, the casual agent of anthracnose disease. AsES activates a cascade of defense responses, including calcium influx, oxidative burst, hypersensitive cell-death response (HR), accumulation of autofluorescent compounds, cell-wall reinforcement with callose and lignin deposition, salicylic acid accumulation, and expression of defense-related genes, such as PR1, PG1, MYB30, RBOH-D, RBOH-F, CHI23, and FLS. The oxidative burst consists in a progressive extracellular accumulation of H(2)O(2) that starts immediately after the contact with AsES and is preceded by a rapid and transient cell membrane depolarization. During this phase takes place also a rapid intracellular accumulation of NO at the chloroplasts. After the first extracellular H(2)O(2) production phase, two intracellular H(2)O(2) accumulation events occur, the first 2 hours after induction, and the second 7 hours after induction. AsES also produces a transient increase of ion leakage, and a progressive alkalinization of the extracellular medium. Confers also local and systemic plant resistance against Botrytis cinerea in Arabidopsis thaliana. Systemic, but not local resistance is dependent on the length of exposure to AsES. The protection to B.cinerea is due to the induction of the plant defenses via the salicylic acid, jasmonic acid and ethylene signaling pathways. Exhibits subtilisin-like proteolytic activity which is necessary but not sufficient for its elicitor function in strawberry plants. Probably induces defense by means of proteolysis of one or multiple host proteins that are specific targets of this protease. The chain is Subtilisin-like serine protease AsES from Sarocladium strictum (Black bundle disease fungus).